The following is an 81-amino-acid chain: Photosystem I iron-sulfur center (81 aa).

2 consecutive 4Fe-4S ferredoxin-type domains span residues 2-31 and 39-68; these read AHSV…MVPW and IASA…VRVY. Residues C11, C14, C17, C21, C48, C51, C54, and C58 each contribute to the [4Fe-4S] cluster site.

In terms of assembly, the eukaryotic PSI reaction center is composed of at least 11 subunits. [4Fe-4S] cluster is required as a cofactor.

It localises to the plastid. The protein localises to the chloroplast thylakoid membrane. The catalysed reaction is reduced [plastocyanin] + hnu + oxidized [2Fe-2S]-[ferredoxin] = oxidized [plastocyanin] + reduced [2Fe-2S]-[ferredoxin]. Apoprotein for the two 4Fe-4S centers FA and FB of photosystem I (PSI); essential for photochemical activity. FB is the terminal electron acceptor of PSI, donating electrons to ferredoxin. The C-terminus interacts with PsaA/B/D and helps assemble the protein into the PSI complex. Required for binding of PsaD and PsaE to PSI. PSI is a plastocyanin-ferredoxin oxidoreductase, converting photonic excitation into a charge separation, which transfers an electron from the donor P700 chlorophyll pair to the spectroscopically characterized acceptors A0, A1, FX, FA and FB in turn. The sequence is that of Photosystem I iron-sulfur center from Gnetum parvifolium (Small-leaved jointfir).